A 178-amino-acid polypeptide reads, in one-letter code: MKHTVEVMIPEAEIKARIAELGRQITERYKDSGSDMVLVGLLRGSFMFMADLCREVQVSHEVDFMTASSYGSGMSTTRDVKILKDLDEDIRGKDVLIVEDIIDSGNTLSKVREILSLREPKSLAICTLLDKPSRREVNVPVEFIGFSIPDEFVVGYGIDYAQRYRHLPYIGKVILLDE.

Residues Arg-43 and Gly-44 each coordinate diphosphate. Glu-99 provides a ligand contact to GMP. Glu-99 is an IMP binding site. 2 residues coordinate Mg(2+): Glu-99 and Asp-100. Catalysis depends on Asp-103, which acts as the Proton acceptor. GMP-binding positions include 103–108, Lys-131, and Asp-159; that span reads DSGNTL. Residues 103–108 and Lys-131 each bind IMP; that span reads DSGNTL. Position 165 (Arg-165) interacts with diphosphate.

It belongs to the purine/pyrimidine phosphoribosyltransferase family. Homotetramer. Mg(2+) is required as a cofactor.

It is found in the cytoplasm. It catalyses the reaction IMP + diphosphate = hypoxanthine + 5-phospho-alpha-D-ribose 1-diphosphate. It carries out the reaction GMP + diphosphate = guanine + 5-phospho-alpha-D-ribose 1-diphosphate. Its pathway is purine metabolism; IMP biosynthesis via salvage pathway; IMP from hypoxanthine: step 1/1. Purine salvage pathway enzyme which catalyzes the transfer of the ribosyl-5-phosphate group from 5-phospho-alpha-D-ribose 1-diphosphate (PRPP) to the N9 position of hypoxanthine to yield IMP (inosine 5'-monophosphate). To a lesser extent, can also act on guanine leading to GMP, but shows a highly less efficient activity with xanthine. The protein is Hypoxanthine phosphoribosyltransferase (hpt) of Shigella flexneri.